Here is a 295-residue protein sequence, read N- to C-terminus: Pyridoxal 5'-phosphate synthase subunit PdxS (295 aa).

Aspartate 25 provides a ligand contact to D-ribose 5-phosphate. The Schiff-base intermediate with D-ribose 5-phosphate role is filled by lysine 82. Residue glycine 154 coordinates D-ribose 5-phosphate. Arginine 166 is a binding site for D-glyceraldehyde 3-phosphate. D-ribose 5-phosphate is bound by residues glycine 215 and 236-237 (GS).

The protein belongs to the PdxS/SNZ family. As to quaternary structure, in the presence of PdxT, forms a dodecamer of heterodimers.

It carries out the reaction aldehydo-D-ribose 5-phosphate + D-glyceraldehyde 3-phosphate + L-glutamine = pyridoxal 5'-phosphate + L-glutamate + phosphate + 3 H2O + H(+). It functions in the pathway cofactor biosynthesis; pyridoxal 5'-phosphate biosynthesis. Catalyzes the formation of pyridoxal 5'-phosphate from ribose 5-phosphate (RBP), glyceraldehyde 3-phosphate (G3P) and ammonia. The ammonia is provided by the PdxT subunit. Can also use ribulose 5-phosphate and dihydroxyacetone phosphate as substrates, resulting from enzyme-catalyzed isomerization of RBP and G3P, respectively. In Haemophilus ducreyi (strain 35000HP / ATCC 700724), this protein is Pyridoxal 5'-phosphate synthase subunit PdxS.